A 202-amino-acid polypeptide reads, in one-letter code: dTTP/UTP pyrophosphatase (202 aa).

Asp-83 serves as the catalytic Proton acceptor.

This sequence belongs to the Maf family. YhdE subfamily. It depends on a divalent metal cation as a cofactor.

Its subcellular location is the cytoplasm. The enzyme catalyses dTTP + H2O = dTMP + diphosphate + H(+). It catalyses the reaction UTP + H2O = UMP + diphosphate + H(+). Nucleoside triphosphate pyrophosphatase that hydrolyzes dTTP and UTP. May have a dual role in cell division arrest and in preventing the incorporation of modified nucleotides into cellular nucleic acids. The protein is dTTP/UTP pyrophosphatase of Polaromonas sp. (strain JS666 / ATCC BAA-500).